The primary structure comprises 363 residues: Uptake hydrogenase small subunit (363 aa).

A signal peptide (tat-type signal) is located at residues 1–43 (MIETFYEVMRRQGISRRSFLKYCSLTATSLGLSPVFVPKIVHA). The [4Fe-4S] cluster site is built by Cys60, Cys63, Cys158, Cys192, His230, Cys233, Cys258, and Cys264. 3 residues coordinate [3Fe-4S] cluster: Cys273, Cys292, and Cys295.

This sequence belongs to the [NiFe]/[NiFeSe] hydrogenase small subunit family. In terms of assembly, heterodimer of a large and a small subunit. The cofactor is [4Fe-4S] cluster. Requires [3Fe-4S] cluster as cofactor. Post-translationally, predicted to be exported by the Tat system. The position of the signal peptide cleavage has not been experimentally proven.

It localises to the cell membrane. The enzyme catalyses H2 + A = AH2. In terms of biological role, this enzyme recycles the H(2) produced by nitrogenase to increase the production of ATP and to protect nitrogenase against inhibition or damage by O(2) under carbon- or phosphate-limited conditions. This chain is Uptake hydrogenase small subunit (hupS), found in Alcaligenes hydrogenophilus.